Here is a 72-residue protein sequence, read N- to C-terminus: Putative membrane protein insertion efficiency factor (72 aa).

This sequence belongs to the UPF0161 family.

Its subcellular location is the cell inner membrane. In terms of biological role, could be involved in insertion of integral membrane proteins into the membrane. This chain is Putative membrane protein insertion efficiency factor, found in Trichodesmium erythraeum (strain IMS101).